Here is a 262-residue protein sequence, read N- to C-terminus: Shikimate dehydrogenase (NADP(+)) (262 aa).

Residues S13 to S15 and T59 contribute to the shikimate site. Residue K63 is the Proton acceptor of the active site. D75 serves as a coordination point for NADP(+). Positions 84 and 99 each coordinate shikimate. NADP(+) is bound by residues G122–A126, N144–K149, and M205. Y207 contributes to the shikimate binding site. G228 serves as a coordination point for NADP(+).

It belongs to the shikimate dehydrogenase family. In terms of assembly, homodimer.

It catalyses the reaction shikimate + NADP(+) = 3-dehydroshikimate + NADPH + H(+). Its pathway is metabolic intermediate biosynthesis; chorismate biosynthesis; chorismate from D-erythrose 4-phosphate and phosphoenolpyruvate: step 4/7. Involved in the biosynthesis of the chorismate, which leads to the biosynthesis of aromatic amino acids. Catalyzes the reversible NADPH linked reduction of 3-dehydroshikimate (DHSA) to yield shikimate (SA). The protein is Shikimate dehydrogenase (NADP(+)) of Ignicoccus hospitalis (strain KIN4/I / DSM 18386 / JCM 14125).